We begin with the raw amino-acid sequence, 664 residues long: Trifunctional UDP-glucose 4,6-dehydratase/UDP-4-keto-6-deoxy-D-glucose 3,5-epimerase/UDP-4-keto-L-rhamnose-reductase RHM3 (664 aa).

13-19 lines the NAD(+) pocket; it reads GAAGFIA. A substrate-binding site is contributed by T132. D133 acts as the Proton donor in catalysis. Active-site proton acceptor residues include E134 and Y159. 386 to 392 contacts NADP(+); sequence GKTGWLG.

This sequence in the N-terminal section; belongs to the NAD(P)-dependent epimerase/dehydratase family. dTDP-glucose dehydratase subfamily. The protein in the C-terminal section; belongs to the dTDP-4-dehydrorhamnose reductase family. Requires NAD(+) as cofactor. NADP(+) serves as cofactor. As to expression, expressed in roots, stems, seedlings, and siliques. Lower expression in inflorescence tips, and leaves.

It carries out the reaction UDP-alpha-D-glucose = UDP-4-dehydro-6-deoxy-alpha-D-glucose + H2O. It participates in carbohydrate biosynthesis. In terms of biological role, trifunctional enzyme involved in UDP-beta-L-rhamnose biosynthesis, a precursor of the primary cell wall components rhamnogalacturonan I (RG-I) and rhamnogalacturonan II (RG-II). Catalyzes the dehydration of UDP-glucose to form UDP-4-dehydro-6-deoxy-D-glucose followed by the epimerization of the C3' and C5' positions of UDP-4-dehydro-6-deoxy-D-glucose to form UDP-4-keto-beta-L-rhamnose and the reduction of UDP-4-keto-beta-L-rhamnose to yield UDP-beta-L-rhamnose. This is Trifunctional UDP-glucose 4,6-dehydratase/UDP-4-keto-6-deoxy-D-glucose 3,5-epimerase/UDP-4-keto-L-rhamnose-reductase RHM3 from Arabidopsis thaliana (Mouse-ear cress).